The sequence spans 335 residues: Tetraacyldisaccharide 4'-kinase (335 aa).

58-65 is a binding site for ATP; that stretch reads TVGGSGKT.

Belongs to the LpxK family.

The enzyme catalyses a lipid A disaccharide + ATP = a lipid IVA + ADP + H(+). It functions in the pathway glycolipid biosynthesis; lipid IV(A) biosynthesis; lipid IV(A) from (3R)-3-hydroxytetradecanoyl-[acyl-carrier-protein] and UDP-N-acetyl-alpha-D-glucosamine: step 6/6. In terms of biological role, transfers the gamma-phosphate of ATP to the 4'-position of a tetraacyldisaccharide 1-phosphate intermediate (termed DS-1-P) to form tetraacyldisaccharide 1,4'-bis-phosphate (lipid IVA). This Shewanella sp. (strain ANA-3) protein is Tetraacyldisaccharide 4'-kinase.